The sequence spans 252 residues: MAATLCCRLLPKAGWVPLTQSVRHGSKAVTRHKKPVHFQKQKLLAVTEYIPPTLSAPPAALAPRVKKTGEESSLAVMLRKDLENLFQEYKMIAVAQNNAISAEDMIHLKHRLKKHAINVKFFPNQVTRSFLNSSIYGNMSPLIFGETVLLASKEPKVKEMLQALRHNPQIVLLGACIENTLFSYQGILSYSKLPSIAIIRGELVSGLTMMTSKTVSMLHHHPAHLSALLQQYVKQQSSADTDKDASIQEAAA.

The transit peptide at 1–24 (MAATLCCRLLPKAGWVPLTQSVRH) directs the protein to the mitochondrion.

The protein belongs to the universal ribosomal protein uL10 family. Component of the mitochondrial ribosome large subunit (39S) which comprises a 16S rRNA and about 50 distinct proteins.

The protein resides in the mitochondrion. The protein is Large ribosomal subunit protein uL10m (mrpl10) of Danio rerio (Zebrafish).